The primary structure comprises 358 residues: Valine dehydrogenase (358 aa).

Lys88 is an active-site residue. 188–194 (GVGKVGH) lines the NAD(+) pocket.

Belongs to the Glu/Leu/Phe/Val dehydrogenases family. In terms of assembly, homodimer.

The protein resides in the cytoplasm. It carries out the reaction L-valine + NAD(+) + H2O = 3-methyl-2-oxobutanoate + NH4(+) + NADH + H(+). It functions in the pathway amino-acid degradation; L-valine degradation. Oxidative deamination of branched-chain amino acids. The catabolism of valine is the major source of fatty acid precursors for macrolide biosynthesis and a vital source of antibiotic precursors. In Streptomyces virginiae (Streptomyces cinnamonensis), this protein is Valine dehydrogenase (vdh).